The following is a 251-amino-acid chain: uncharacterized protein (251 aa).

12-21 (TGASSQGDIG) lines the NADP(+) pocket. A substrate-binding site is contributed by serine 148. Tyrosine 161 serves as the catalytic Proton acceptor.

Belongs to the short-chain dehydrogenases/reductases (SDR) family.

This is an uncharacterized protein from Bacillus subtilis (strain 168).